The chain runs to 113 residues: MHEMSLAEGVLQLVEDTARRESASRVKLVVLEIGRLSSVEPEAIKFCFEAVTHGSIAQGAALEIIAVPGAGWCMQCAETVPMTELYGACPTCGSHQVQPTGGTEMRVKEIEIE.

Position 2 (His-2) interacts with Ni(2+). Zn(2+) contacts are provided by Cys-73, Cys-76, Cys-89, and Cys-92.

The protein belongs to the HypA/HybF family.

In terms of biological role, involved in the maturation of [NiFe] hydrogenases. Required for nickel insertion into the metal center of the hydrogenase. The protein is Hydrogenase maturation factor HypA of Dechloromonas aromatica (strain RCB).